Here is a 352-residue protein sequence, read N- to C-terminus: NADH-ubiquinone oxidoreductase chain 2 (352 aa).

Transmembrane regions (helical) follow at residues Met-4–Glu-24, Trp-26–Phe-46, Phe-60–Phe-80, Leu-96–Pro-116, Phe-124–Tyr-144, Phe-150–Leu-170, Ile-178–Leu-198, Leu-205–Phe-225, Ile-241–Ile-261, Gly-274–Leu-294, and Leu-330–Ile-350.

Belongs to the complex I subunit 2 family.

It is found in the mitochondrion inner membrane. It catalyses the reaction a ubiquinone + NADH + 5 H(+)(in) = a ubiquinol + NAD(+) + 4 H(+)(out). In terms of biological role, core subunit of the mitochondrial membrane respiratory chain NADH dehydrogenase (Complex I) that is believed to belong to the minimal assembly required for catalysis. Complex I functions in the transfer of electrons from NADH to the respiratory chain. The immediate electron acceptor for the enzyme is believed to be ubiquinone. This Paracentrotus lividus (Common sea urchin) protein is NADH-ubiquinone oxidoreductase chain 2 (ND2).